We begin with the raw amino-acid sequence, 339 residues long: Dihydroorotate dehydrogenase (quinone) (339 aa).

FMN-binding positions include 62 to 66 (AGMDK) and Thr86. Substrate is bound at residue Lys66. Position 111-115 (111-115 (NRMGF)) interacts with substrate. Residues Asn139 and Asn172 each coordinate FMN. Asn172 contacts substrate. Ser175 acts as the Nucleophile in catalysis. Asn177 contributes to the substrate binding site. FMN contacts are provided by Lys217 and Thr245. A substrate-binding site is contributed by 246–247 (NT). FMN-binding positions include Gly268, Gly297, and 318-319 (YS).

This sequence belongs to the dihydroorotate dehydrogenase family. Type 2 subfamily. In terms of assembly, monomer. The cofactor is FMN.

The protein localises to the cell membrane. It catalyses the reaction (S)-dihydroorotate + a quinone = orotate + a quinol. The protein operates within pyrimidine metabolism; UMP biosynthesis via de novo pathway; orotate from (S)-dihydroorotate (quinone route): step 1/1. Functionally, catalyzes the conversion of dihydroorotate to orotate with quinone as electron acceptor. The polypeptide is Dihydroorotate dehydrogenase (quinone) (Shewanella sediminis (strain HAW-EB3)).